Reading from the N-terminus, the 144-residue chain is Nucleoside diphosphate kinase (144 aa).

Lysine 11, phenylalanine 59, arginine 87, threonine 93, arginine 104, and asparagine 114 together coordinate ATP. The active-site Pros-phosphohistidine intermediate is the histidine 117.

Belongs to the NDK family. Homotetramer. Requires Mg(2+) as cofactor.

It localises to the cytoplasm. It carries out the reaction a 2'-deoxyribonucleoside 5'-diphosphate + ATP = a 2'-deoxyribonucleoside 5'-triphosphate + ADP. The catalysed reaction is a ribonucleoside 5'-diphosphate + ATP = a ribonucleoside 5'-triphosphate + ADP. Its function is as follows. Major role in the synthesis of nucleoside triphosphates other than ATP. The ATP gamma phosphate is transferred to the NDP beta phosphate via a ping-pong mechanism, using a phosphorylated active-site intermediate. The chain is Nucleoside diphosphate kinase from Aliivibrio salmonicida (strain LFI1238) (Vibrio salmonicida (strain LFI1238)).